The chain runs to 217 residues: MPSLPVPQWIVSPGLTDYAAALADMESRAAAIHADEAGERIWLLEHPPLYTAGTSADPAELLDPRFPVYDAGRGGRYTYHGPGQRVGYVQLDLTRRGRDVRAYVHALEGWVIDALALLGVKARRAEGRIGIWTDDVRGREAKIGAIGVRVKRWVTLHGFSLNVAPDLTHFTGIVPCGIAEYPVTSLAALGKATGFSEVDAALARTLPAFLDKLRPSD.

Residues 35–214 (DEAGERIWLL…TLPAFLDKLR (180 aa)) enclose the BPL/LPL catalytic domain. Substrate is bound by residues 73–80 (RGGRYTYH), 145–147 (AIG), and 158–160 (GFS). Cysteine 176 functions as the Acyl-thioester intermediate in the catalytic mechanism.

It belongs to the LipB family.

The protein resides in the cytoplasm. It carries out the reaction octanoyl-[ACP] + L-lysyl-[protein] = N(6)-octanoyl-L-lysyl-[protein] + holo-[ACP] + H(+). The protein operates within protein modification; protein lipoylation via endogenous pathway; protein N(6)-(lipoyl)lysine from octanoyl-[acyl-carrier-protein]: step 1/2. In terms of biological role, catalyzes the transfer of endogenously produced octanoic acid from octanoyl-acyl-carrier-protein onto the lipoyl domains of lipoate-dependent enzymes. Lipoyl-ACP can also act as a substrate although octanoyl-ACP is likely to be the physiological substrate. The polypeptide is Octanoyltransferase (Sphingopyxis alaskensis (strain DSM 13593 / LMG 18877 / RB2256) (Sphingomonas alaskensis)).